A 299-amino-acid chain; its full sequence is Hairy/enhancer-of-split related with YRPW motif protein 1 (299 aa).

Residues Met1 to Arg53 form a disordered region. Residues Glu28 to Val47 are compositionally biased toward polar residues. Positions Leu48–Ala117 are transcriptional repression and interaction with NCOR1 and SIN3A. In terms of domain architecture, bHLH spans Ala49–Leu104. The 37-residue stretch at Tyr122–Leu158 folds into the Orange domain. The segment at Leu194 to Ser234 is disordered. A YRPW motif motif is present at residues Tyr289–Trp292.

This sequence belongs to the HEY family. In terms of assembly, may self-associate. Interacts with HES1, NCOR1 and SIN3A. Interacts with GATA4, GATA6 and HDAC1 and HEYL. Interacts with CCDC89/BOIP. Expressed in somitic mesoderm, brain, central nervous system, kidney, heart, nasal epithelium, limbs, lung, muscle, ovary and testis.

It is found in the nucleus. Transcriptional repressor which binds preferentially to the canonical E box sequence 5'-CACGTG-3'. Downstream effector of Notch signaling required for cardiovascular development. Specifically required for the Notch-induced endocardial epithelial to mesenchymal transition, which is itself criticial for cardiac valve and septum development. May be required in conjunction with HEY2 to specify arterial cell fate or identity. Promotes maintenance of neuronal precursor cells and glial versus neuronal fate specification. Represses transcription by the cardiac transcriptional activators GATA4 and GATA6 and by the neuronal bHLH factors ASCL1/MASH1 and NEUROD4/MATH3. This is Hairy/enhancer-of-split related with YRPW motif protein 1 (Hey1) from Mus musculus (Mouse).